The sequence spans 267 residues: Trehalose 2-sulfotransferase (267 aa).

Residues Gln14, 33–39 (EPQEFFQ), Pro48, and Trp53 contribute to the alpha,alpha-trehalose site. The active-site Proton acceptor is Glu36.

This sequence belongs to the Stf0 sulfotransferase family. In terms of assembly, homodimer.

It carries out the reaction alpha,alpha-trehalose + 3'-phosphoadenylyl sulfate = 2-O-sulfo-alpha,alpha-trehalose + adenosine 3',5'-bisphosphate + H(+). The protein operates within glycolipid metabolism. Functionally, catalyzes the sulfuryl group transfer from 3'-phosphoadenosine-5'-phosphosulfate (PAPS) to trehalose, leading to trehalose-2-sulfate (T2S). The sulfation of trehalose is the first step in the biosynthesis of sulfolipid-1 (SL-1), a major cell wall glycolipid and the most abundant sulfated metabolite found in Mycobacterium tuberculosis, that is a potential virulence factor thought to mediate host-pathogen interactions. The chain is Trehalose 2-sulfotransferase from Mycobacterium tuberculosis (strain ATCC 35801 / TMC 107 / Erdman).